The chain runs to 564 residues: Solute carrier family 22 member 21 (564 aa).

The Cytoplasmic portion of the chain corresponds to 1 to 20; it reads MLDYDEVTAFLGEWGTFQRL. The helical transmembrane segment at 21–41 threads the bilayer; that stretch reads IFFLLSASIIPNGFTGLSAVF. At 42 to 142 the chain is on the extracellular side; that stretch reads LTAIPEHRCR…DLVCKDDWKA (101 aa). 3 N-linked (GlcNAc...) asparagine glycosylation sites follow: N57, N64, and N91. The chain crosses the membrane as a helical span at residues 143–163; that stretch reads PLTTSFFYVGVLLGSFISGQL. The Cytoplasmic segment spans residues 164-172; the sequence is SDRFGRKNI. Residues 173-193 traverse the membrane as a helical segment; it reads LFLTMAMHTGFSFIQVFSVNF. Residues 194 to 197 are Extracellular-facing; the sequence is EMFT. A helical membrane pass occupies residues 198–218; that stretch reads LLYTLVGMGHISNYVAAFVLG. 218-225 is an ATP binding site; it reads GTEMLSKS. The Cytoplasmic segment spans residues 219-232; sequence TEMLSKSVRIIFAT. The helical transmembrane segment at 233–253 threads the bilayer; that stretch reads LGVCIFFAFGFMVLPLFAYFI. Topologically, residues 254–257 are extracellular; it reads REWR. The chain crosses the membrane as a helical span at residues 258–278; that stretch reads RLLLAITLPGVLCGALWWFIP. Residues 279–344 lie on the Cytoplasmic side of the membrane; sequence ESPRWLISQG…YDLVRTPNIR (66 aa). The helical transmembrane segment at 345-365 threads the bilayer; it reads ILTIMSIILWLTISVGYFGLS. Residues 366 to 376 lie on the Extracellular side of the membrane; sequence LDTPNLNGNIY. A helical transmembrane segment spans residues 377–397; that stretch reads VNCFLLAAVEVPAYVLAWLLL. Topologically, residues 398–409 are cytoplasmic; the sequence is QHVSRRYSMAGS. Residues 410–430 traverse the membrane as a helical segment; that stretch reads LFLGGSVLLLVQLVPSDLHYL. Over 431–433 the chain is Extracellular; that stretch reads STT. The chain crosses the membrane as a helical span at residues 434–454; that stretch reads LVMVGKFGITSAYSMVYVYTA. Topologically, residues 455-465 are cytoplasmic; sequence ELYPTVVRNMG. Residues 466–486 form a helical membrane-spanning segment; that stretch reads VGVSSTASRLGSILSPYFVYL. Topologically, residues 487–491 are extracellular; sequence GAYDR. A helical membrane pass occupies residues 492-512; that stretch reads RLPYILMGSLTILTAIITLFF. The Cytoplasmic portion of the chain corresponds to 513–564; the sequence is PESSGVSLPETIDEMQKVKKLKQRQSLSKKGSPKESKGNVSRTSRTSEPKGF. Residues 532-564 are disordered; that stretch reads KLKQRQSLSKKGSPKESKGNVSRTSRTSEPKGF.

Belongs to the major facilitator (TC 2.A.1) superfamily. Organic cation transporter (TC 2.A.1.19) family. In terms of tissue distribution, predominantly expressed in testis.

It localises to the peroxisome membrane. Functionally, sodium-ion independent, medium affinity carnitine transporter. Also transports organic cations such as tetraethylammonium (TEA) without the involvement of sodium. Relative uptake activity ratio of carnitine to TEA is 746. The polypeptide is Solute carrier family 22 member 21 (Slc22a21) (Mus musculus (Mouse)).